A 361-amino-acid polypeptide reads, in one-letter code: DNA replication and repair protein RecF (361 aa).

30 to 37 (GPNGSGKT) serves as a coordination point for ATP.

It belongs to the RecF family.

It is found in the cytoplasm. The RecF protein is involved in DNA metabolism; it is required for DNA replication and normal SOS inducibility. RecF binds preferentially to single-stranded, linear DNA. It also seems to bind ATP. This Yersinia enterocolitica serotype O:8 / biotype 1B (strain NCTC 13174 / 8081) protein is DNA replication and repair protein RecF.